Reading from the N-terminus, the 197-residue chain is Putative WUSCHEL-related homeobox 10 (197 aa).

The homeobox; WUS-type DNA-binding region spans 75 to 139 (STRPRWTPTT…NRRARSKRKQ (65 aa)). The interval 132–168 (RARSKRKQPPTTTITSSQADDAAVTTTEERGRCGDDS) is disordered. A compositionally biased stretch (polar residues) spans 140-150 (PPTTTITSSQA).

Belongs to the WUS homeobox family.

It is found in the nucleus. Functionally, potential transcription factor that plays a central role during developmental processes. The chain is Putative WUSCHEL-related homeobox 10 (WOX10) from Arabidopsis thaliana (Mouse-ear cress).